An 897-amino-acid chain; its full sequence is Interleukin enhancer-binding factor 3 (897 aa).

Positions 5–378 (RIFVNDDRHV…PMKRPMEEDG (374 aa)) constitute a DZF domain. A disordered region spans residues 52 to 85 (QEKGNSELSEAENMDTPPDDESKEGAGEQKAEHM). Acidic residues predominate over residues 60–73 (SEAENMDTPPDDES). Thr67 is subject to Phosphothreonine. Residues 74–85 (KEGAGEQKAEHM) are compositionally biased toward basic and acidic residues. The residue at position 100 (Lys100) is an N6-acetyllysine. Residue Thr188 is modified to Phosphothreonine; by PKR. Ser190 carries the phosphoserine modification. A Glycyl lysine isopeptide (Lys-Gly) (interchain with G-Cter in ubiquitin) cross-link involves residue Lys297. Position 315 is a phosphothreonine; by PKR (Thr315). Lys348 participates in a covalent cross-link: Glycyl lysine isopeptide (Lys-Gly) (interchain with G-Cter in SUMO1). Residues 363–401 (TTYAITPMKRPMEEDGEEKSPSKKKKKIQKKEEKAEPPQ) are disordered. The Bipartite nuclear localization signal signature appears at 371–389 (KRPMEEDGEEKSPSKKKKK). Over residues 372–383 (RPMEEDGEEKSP) the composition is skewed to basic and acidic residues. A phosphoserine mark is found at Ser382 and Ser384. Lys396 participates in a covalent cross-link: Glycyl lysine isopeptide (Lys-Gly) (interchain with G-Cter in SUMO2). Residues 398–467 (EPPQAMNALM…AVKVLQDMGL (70 aa)) form the DRBM 1 domain. Lys460 bears the N6-acetyllysine mark. Disordered stretches follow at residues 466-524 (GLPT…LTKH), 624-662 (GMGGPMHNEAPPPPNIRGRGRGGNIRGRGRGRGFGGTNH), and 720-897 (GDSY…YQYR). Basic and acidic residues predominate over residues 472–481 (EGRDSSKGED). Residues Ser476, Ser477, Ser482, and Ser486 each carry the phosphoserine modification. Residue Lys489 forms a Glycyl lysine isopeptide (Lys-Gly) (interchain with G-Cter in SUMO2) linkage. Low complexity predominate over residues 499-508 (VEAVSNPSSV). The DRBM 2 domain maps to 524–590 (HGKNPVMELN…ALAALEKLFP (67 aa)). The segment at 609–897 (RGGPKFAAKP…TEHSMNYQYR (289 aa)) is interaction with PRMT1. The span at 644–662 (RGGNIRGRGRGRGFGGTNH) shows a compositional bias: gly residues. Low complexity-rich tracts occupy residues 745–769 (SYSSGYQSHQGQQQPYNQSQYSSYG), 783–794 (GSYSSYSNSYNS), and 802–812 (DYSYDSKFNYS). Ser794, Ser812, Ser814, and Ser818 each carry phosphoserine. The span at 813-822 (GSGGRSGGNS) shows a compositional bias: gly residues. Residues 823 to 833 (YGSSGSSYNTG) show a composition bias toward low complexity. Residues 834–844 (SHGGYGAGSGG) are compositionally biased toward gly residues. A compositionally biased stretch (low complexity) spans 845-885 (SSSYQGKQGGYSSQSNYSSPGSSQSYSGPASSYQSSQGGYS).

As to quaternary structure, identified in a IGF2BP1-dependent mRNP granule complex containing untranslated mRNAs. Interacts with FUS and SMN. Interacts (via C-terminus) with PRMT1. Forms a complex with ILF2. Can also bind to PRKDC/XRCC7: this may stabilize the interaction of PRKDC/XRCC7 and the heterodimeric complex of XRCC6/KU70 and XRCC5/KU80. Forms a heteromeric complex with ZNF346 and ILF3. Found in a nuclear export complex with XPO5, ILF3, Ran and double-stranded RNA or double-stranded minihelix VA1 RNA. Found in a nuclear export complex with XPO5, RAN, ILF3, ZNF346 and double-stranded RNA. Interacts with XPO5 and ZNF346. Forms a complex with ILF2, YLPM1, KHDRBS1, RBMX, NCOA5 and PPP1CA. Interacts with AGO1 and AGO2. Interacts with DHX36; this interaction occurs in a RNA-dependent manner. Interacts with ELAVL1; this interaction occurs in a RNA-dependent manner. Interacts with HAVCR2; this interaction promotes ILF3 ubiquitination and subsequent degradation. Post-translationally, phosphorylated at Thr-188 and Thr-315 by PKR in response to RNA viruses. This phosphorylation results in the dissociation of ILF2 from the ILF2-ILF3 complex resulting in a cytoplasmic sequestration of ILF3 where it can bind to viral RNAs and impede viral replication. Methylated by protein arginine N-methyltransferase 1.

It localises to the nucleus. Its subcellular location is the nucleolus. The protein localises to the cytoplasm. Its function is as follows. RNA-binding protein that plays an essential role in the biogenesis of circular RNAs (circRNAs) which are produced by back-splicing circularization of pre-mRNAs. Within the nucleus, promotes circRNAs processing by stabilizing the regulatory elements residing in the flanking introns of the circularized exons. Plays thereby a role in the back-splicing of a subset of circRNAs. As a consequence, participates in a wide range of transcriptional and post-transcriptional processes. Binds to poly-U elements and AU-rich elements (AREs) in the 3'-UTR of target mRNAs. Upon viral infection, ILF3 accumulates in the cytoplasm and participates in the innate antiviral response. Mechanistically, ILF3 becomes phosphorylated and activated by the double-stranded RNA-activated protein kinase/PKR which releases ILF3 from cellular mature circRNAs. In turn, unbound ILF3 molecules are able to interact with and thus inhibit viral mRNAs. The protein is Interleukin enhancer-binding factor 3 (Ilf3) of Rattus norvegicus (Rat).